A 414-amino-acid polypeptide reads, in one-letter code: FAD-dependent monooxygenase adaC (414 aa).

Positions 32, 43, 115, 325, and 338 each coordinate FAD.

Belongs to the paxM FAD-dependent monooxygenase family. FAD serves as cofactor.

It carries out the reaction 3-(2,4-dioxopentyl)-3,6,8,9-tetrahydroxy-1-oxo-1,2,3,4-tetrahydroanthracene-2-carboxyl-[ACP] + NADPH + O2 + H(+) = 3-(2,4-dioxopentyl)-2,3,6,8,9-pentahydroxy-1-oxo-1,2,3,4-tetrahydroanthracene-2-carboxyl-[ACP] + NADP(+) + H2O. The protein operates within secondary metabolite biosynthesis. In terms of biological role, FAD-dependent monooxygenase; part of the gene cluster that mediates the biosynthesis of the linear tetracyclic TAN-1612 neuropeptide Y receptor antagonist. The decaketide backbone of TAN-1612 is synthesized by the non-reducing polyketide synthase adaA via condensation of one acetyl-CoA starter unit with 9 malonyl-CoA units. The FAD-dependent monooxygenase adaC then performs hydroxylation at C2 while the polaketide chain is still attached to the NRPKS adaA. The alpha-hydroxylation step at C2 appears to be crucial for the following C18-C1 Claisen cyclization and release of the C9-hydroxyl version of TAN-1612 from the NRPKS adaA, two steps performed by the lactamase-like protein adaB. Finally, the O-methyltransferase adaD performs the C9 O-methylation to complete the biosynthesis of TAN-1612. This chain is FAD-dependent monooxygenase adaC, found in Aspergillus niger.